A 97-amino-acid chain; its full sequence is MSRKCELTGVGVLYGNNVSHSQRKTRRRFEPNLRSVKFTSDITAGEYRLSVNARCISSVEKAGGFDAYILKADDNVLSGNARAIKKKIIQTKTAKSL.

The protein belongs to the bacterial ribosomal protein bL28 family.

The sequence is that of Large ribosomal subunit protein bL28 from Rickettsia rickettsii (strain Iowa).